Reading from the N-terminus, the 159-residue chain is Bacterioferritin (159 aa).

In terms of domain architecture, Ferritin-like diiron spans 1-145; that stretch reads MQGDPEVLRL…TQLELMDKLG (145 aa). Glu51 contacts Fe cation. Met52 contacts heme b. The Fe cation site is built by His54, Glu94, Glu127, and His130.

This sequence belongs to the bacterioferritin family. As to quaternary structure, homooligomer of 24 subunits, arranged as 12 dimers, that are packed together to form an approximately spherical molecule with a central cavity, in which large amounts of iron can be deposited. Heme b is required as a cofactor.

It catalyses the reaction 4 Fe(2+) + O2 + 4 H(+) = 4 Fe(3+) + 2 H2O. It carries out the reaction Fe(2+)(in) = Fe(2+)(out). Iron-storage protein, whose ferroxidase center binds Fe(2+), oxidizes it using dioxygen to Fe(3+), and participates in the subsequent Fe(3+) oxide mineral core formation within the central cavity of the BFR protein shell. The chain is Bacterioferritin (bfr) from Mycobacterium avium.